Here is a 392-residue protein sequence, read N- to C-terminus: Succinate--CoA ligase [ADP-forming] subunit beta (392 aa).

Residues 9 to 248 (KEILRGFGVT…TSEEDPLEVE (240 aa)) enclose the ATP-grasp domain. ATP contacts are provided by residues Lys50, 57–59 (GRG), Glu103, Met106, and Glu111. Asn203 and Asp217 together coordinate Mg(2+). Substrate-binding positions include Asn268 and 325–327 (GIV).

Belongs to the succinate/malate CoA ligase beta subunit family. Heterotetramer of two alpha and two beta subunits. Mg(2+) serves as cofactor.

It carries out the reaction succinate + ATP + CoA = succinyl-CoA + ADP + phosphate. It catalyses the reaction GTP + succinate + CoA = succinyl-CoA + GDP + phosphate. It functions in the pathway carbohydrate metabolism; tricarboxylic acid cycle; succinate from succinyl-CoA (ligase route): step 1/1. In terms of biological role, succinyl-CoA synthetase functions in the citric acid cycle (TCA), coupling the hydrolysis of succinyl-CoA to the synthesis of either ATP or GTP and thus represents the only step of substrate-level phosphorylation in the TCA. The beta subunit provides nucleotide specificity of the enzyme and binds the substrate succinate, while the binding sites for coenzyme A and phosphate are found in the alpha subunit. The chain is Succinate--CoA ligase [ADP-forming] subunit beta from Chloroherpeton thalassium (strain ATCC 35110 / GB-78).